The primary structure comprises 214 residues: Adenylate kinase (214 aa).

10-15 (GAGKGT) serves as a coordination point for ATP. Positions 30 to 59 (STGDMLRAAIKEGTPLGLEAKKVMDAGQLI) are NMP. AMP is bound by residues threonine 31, arginine 36, 57–59 (QLI), 85–88 (GFPR), and glutamine 92. Residues 122-159 (GRRVHPGSGRVYHVVYNPPKVADKDNETGEELIIRADD) form an LID region. Residues arginine 123 and 132–133 (VY) each bind ATP. Residues arginine 156 and arginine 167 each contribute to the AMP site. Glutamine 200 contributes to the ATP binding site.

This sequence belongs to the adenylate kinase family. As to quaternary structure, monomer.

The protein localises to the cytoplasm. The catalysed reaction is AMP + ATP = 2 ADP. It functions in the pathway purine metabolism; AMP biosynthesis via salvage pathway; AMP from ADP: step 1/1. Functionally, catalyzes the reversible transfer of the terminal phosphate group between ATP and AMP. Plays an important role in cellular energy homeostasis and in adenine nucleotide metabolism. The protein is Adenylate kinase of Pseudoalteromonas translucida (strain TAC 125).